A 476-amino-acid polypeptide reads, in one-letter code: Aspartyl/glutamyl-tRNA(Asn/Gln) amidotransferase subunit B (476 aa).

It belongs to the GatB/GatE family. GatB subfamily. In terms of assembly, heterotrimer of A, B and C subunits.

It carries out the reaction L-glutamyl-tRNA(Gln) + L-glutamine + ATP + H2O = L-glutaminyl-tRNA(Gln) + L-glutamate + ADP + phosphate + H(+). It catalyses the reaction L-aspartyl-tRNA(Asn) + L-glutamine + ATP + H2O = L-asparaginyl-tRNA(Asn) + L-glutamate + ADP + phosphate + 2 H(+). Functionally, allows the formation of correctly charged Asn-tRNA(Asn) or Gln-tRNA(Gln) through the transamidation of misacylated Asp-tRNA(Asn) or Glu-tRNA(Gln) in organisms which lack either or both of asparaginyl-tRNA or glutaminyl-tRNA synthetases. The reaction takes place in the presence of glutamine and ATP through an activated phospho-Asp-tRNA(Asn) or phospho-Glu-tRNA(Gln). The chain is Aspartyl/glutamyl-tRNA(Asn/Gln) amidotransferase subunit B from Neisseria meningitidis serogroup A / serotype 4A (strain DSM 15465 / Z2491).